Reading from the N-terminus, the 540-residue chain is Hydroxylamine reductase (540 aa).

[4Fe-4S] cluster is bound by residues C3, C6, C15, and C21. 8 residues coordinate hybrid [4Fe-2O-2S] cluster: H236, E260, C304, C395, C423, C448, E483, and K485. C395 carries the post-translational modification Cysteine persulfide.

It belongs to the HCP family. [4Fe-4S] cluster serves as cofactor. Requires hybrid [4Fe-2O-2S] cluster as cofactor.

Its subcellular location is the cytoplasm. It carries out the reaction A + NH4(+) + H2O = hydroxylamine + AH2 + H(+). Catalyzes the reduction of hydroxylamine to form NH(3) and H(2)O. This chain is Hydroxylamine reductase, found in Methanosarcina mazei (strain ATCC BAA-159 / DSM 3647 / Goe1 / Go1 / JCM 11833 / OCM 88) (Methanosarcina frisia).